A 264-amino-acid polypeptide reads, in one-letter code: tRNA pseudouridine synthase A (264 aa).

D51 functions as the Nucleophile in the catalytic mechanism. Position 109 (Y109) interacts with substrate.

This sequence belongs to the tRNA pseudouridine synthase TruA family. As to quaternary structure, homodimer.

The catalysed reaction is uridine(38/39/40) in tRNA = pseudouridine(38/39/40) in tRNA. Functionally, formation of pseudouridine at positions 38, 39 and 40 in the anticodon stem and loop of transfer RNAs. The polypeptide is tRNA pseudouridine synthase A (Vibrio atlanticus (strain LGP32) (Vibrio splendidus (strain Mel32))).